We begin with the raw amino-acid sequence, 215 residues long: MRLEAENLAGERGGETIFSHLSFTIGTGQALVVTGPNGSGKSTLLRIICGLLAPEAGEVKLTEGTQIVPVRAACHYLGHQNAMKPALSVRENLLFWQKFNGGEALDIGAALEAVDLAGVEHLPFGYLSTGQKRRVSIAKLLVSHRPLWIVDEPTAGLDKASEARFAELMREHMRQDGMIIAATHIPLGLDGAISTTGNALVRSLDMAAFSVEDIA.

The ABC transporter domain occupies 3 to 215 (LEAENLAGER…MAAFSVEDIA (213 aa)). 35 to 42 (GPNGSGKS) provides a ligand contact to ATP.

This sequence belongs to the ABC transporter superfamily. CcmA exporter (TC 3.A.1.107) family. In terms of assembly, the complex is composed of two ATP-binding proteins (CcmA) and two transmembrane proteins (CcmB).

Its subcellular location is the cell inner membrane. The catalysed reaction is heme b(in) + ATP + H2O = heme b(out) + ADP + phosphate + H(+). Functionally, part of the ABC transporter complex CcmAB involved in the biogenesis of c-type cytochromes; once thought to export heme, this seems not to be the case, but its exact role is uncertain. Responsible for energy coupling to the transport system. The protein is Cytochrome c biogenesis ATP-binding export protein CcmA of Brucella abortus (strain 2308).